The primary structure comprises 130 residues: Small ribosomal subunit protein uS9 (130 aa).

It belongs to the universal ribosomal protein uS9 family.

The polypeptide is Small ribosomal subunit protein uS9 (Xanthomonas campestris pv. campestris (strain 8004)).